Reading from the N-terminus, the 475-residue chain is 3-isopropylmalate dehydratase large subunit (475 aa).

Positions 353, 414, and 417 each coordinate [4Fe-4S] cluster.

It belongs to the aconitase/IPM isomerase family. LeuC type 1 subfamily. Heterodimer of LeuC and LeuD. It depends on [4Fe-4S] cluster as a cofactor.

The enzyme catalyses (2R,3S)-3-isopropylmalate = (2S)-2-isopropylmalate. Its pathway is amino-acid biosynthesis; L-leucine biosynthesis; L-leucine from 3-methyl-2-oxobutanoate: step 2/4. Its function is as follows. Catalyzes the isomerization between 2-isopropylmalate and 3-isopropylmalate, via the formation of 2-isopropylmaleate. The chain is 3-isopropylmalate dehydratase large subunit from Marinomonas sp. (strain MWYL1).